The following is a 413-amino-acid chain: Serine hydroxymethyltransferase (413 aa).

(6S)-5,6,7,8-tetrahydrofolate-binding positions include leucine 117 and 121-123 (GHL). Lysine 226 carries the post-translational modification N6-(pyridoxal phosphate)lysine. (6S)-5,6,7,8-tetrahydrofolate-binding positions include glutamate 239 and 349 to 351 (SPF).

The protein belongs to the SHMT family. As to quaternary structure, homodimer. Pyridoxal 5'-phosphate is required as a cofactor.

It is found in the cytoplasm. It catalyses the reaction (6R)-5,10-methylene-5,6,7,8-tetrahydrofolate + glycine + H2O = (6S)-5,6,7,8-tetrahydrofolate + L-serine. The protein operates within one-carbon metabolism; tetrahydrofolate interconversion. It participates in amino-acid biosynthesis; glycine biosynthesis; glycine from L-serine: step 1/1. Catalyzes the reversible interconversion of serine and glycine with tetrahydrofolate (THF) serving as the one-carbon carrier. This reaction serves as the major source of one-carbon groups required for the biosynthesis of purines, thymidylate, methionine, and other important biomolecules. Also exhibits THF-independent aldolase activity toward beta-hydroxyamino acids, producing glycine and aldehydes, via a retro-aldol mechanism. This chain is Serine hydroxymethyltransferase, found in Bacillus cereus (strain AH820).